We begin with the raw amino-acid sequence, 860 residues long: MQEQYRPEDIESHVQRHWDEQKTFQVTEDAGKEKYYCLSMLPYPSGRLHMGHVRNYTIGDVISRYQRMLGKNVLQPIGWDAFGLPAEGAAVKNNTAPAPWTYANIDYMKNQLKLLGFGYDWSREIATCKPDYYRWEQWFFTKLYEKGLVYKKTSAVNWCPNDQTVLANEQVIDGCCWRCDSKVERKEIPQWFIKITDYADQLLNDLDRLEEWPEQVKTMQRNWIGRSEGVEITFHVADRDDTFAVYTTRPDTFMGVSYLAIAAAHPLAQQAATGNPALTQFIDECKNTKVAEADMATMEKKGMATGLYAIHPLNGERLPIWVANFVLMDYGTGAVMSVPAHDQRDWEFATRYDLPMKPVILTADGQAPDIRAAAMTDKGVLFNSGEFDGLDFSAAFDAVANRLIAAGVGERKVNYRLRDWGVSRQRYWGAPIPMMTLEDGSVIPTPEEQLPVILPEDVVMNGITSPIKADPSWAKTTVNGQPALRETDTFDTFMESSWYYARYTCPQFDQGMLDPQAANYWLPVDQYVGGIEHAIMHLMYFRFFHKLMRDAGLVDSDEPAKRLLCQGMVLADAFYYTGTNGERNWVSPVDVTVERDDKGRITQATDRDGRELVYAGMSKMSKSKNNGIDPQVMVERYGADTVRLFMMFASPAEMTLEWQESGVEGANRFLKRVWKLAFDHQQKGLASALDLTALNDDQKALRRDLHKTIAKVSDDIGRRQTFNTAIAAVMELMNKLTRAPQESEQDRALMQEALLAVVRMLYPFTPHVCFTLWRALGGAGDIDTAPWPVADDAAMVEDSKLIVVQVNGKVRGKITVAADASEEQVRALAAQEPLVAKYLDGVTVRKVIFVPGKLLNLVVG.

The 'HIGH' region signature appears at 42-52 (PYPSGRLHMGH). Positions 619-623 (KMSKS) match the 'KMSKS' region motif. An ATP-binding site is contributed by K622.

It belongs to the class-I aminoacyl-tRNA synthetase family.

It is found in the cytoplasm. It catalyses the reaction tRNA(Leu) + L-leucine + ATP = L-leucyl-tRNA(Leu) + AMP + diphosphate. The polypeptide is Leucine--tRNA ligase (Edwardsiella ictaluri (strain 93-146)).